We begin with the raw amino-acid sequence, 161 residues long: 2-C-methyl-D-erythritol 2,4-cyclodiphosphate synthase (161 aa).

Residues aspartate 10 and histidine 12 each contribute to the a divalent metal cation site. Residues 10 to 12 and 36 to 37 each bind 4-CDP-2-C-methyl-D-erythritol 2-phosphate; these read DVH and HS. Histidine 44 is an a divalent metal cation binding site. Residues 58–60, 63–67, 102–108, 134–137, phenylalanine 141, and arginine 144 each bind 4-CDP-2-C-methyl-D-erythritol 2-phosphate; these read DIG, FPDTD, AQAPKMA, and TTTE.

The protein belongs to the IspF family. In terms of assembly, homotrimer. A divalent metal cation serves as cofactor.

It catalyses the reaction 4-CDP-2-C-methyl-D-erythritol 2-phosphate = 2-C-methyl-D-erythritol 2,4-cyclic diphosphate + CMP. Its pathway is isoprenoid biosynthesis; isopentenyl diphosphate biosynthesis via DXP pathway; isopentenyl diphosphate from 1-deoxy-D-xylulose 5-phosphate: step 4/6. Its function is as follows. Involved in the biosynthesis of isopentenyl diphosphate (IPP) and dimethylallyl diphosphate (DMAPP), two major building blocks of isoprenoid compounds. Catalyzes the conversion of 4-diphosphocytidyl-2-C-methyl-D-erythritol 2-phosphate (CDP-ME2P) to 2-C-methyl-D-erythritol 2,4-cyclodiphosphate (ME-CPP) with a corresponding release of cytidine 5-monophosphate (CMP). In Shewanella sediminis (strain HAW-EB3), this protein is 2-C-methyl-D-erythritol 2,4-cyclodiphosphate synthase.